The primary structure comprises 261 residues: Metallo-beta-lactamase fold-containing protein ST1585 (261 aa).

Zn(2+) contacts are provided by His-58, His-60, Asp-62, His-63, His-148, Asp-165, and His-207.

Belongs to the metallo-beta-lactamase superfamily. In terms of assembly, monomer.

The sequence is that of Metallo-beta-lactamase fold-containing protein ST1585 from Sulfurisphaera tokodaii (strain DSM 16993 / JCM 10545 / NBRC 100140 / 7) (Sulfolobus tokodaii).